A 637-amino-acid polypeptide reads, in one-letter code: ATP-dependent zinc metalloprotease FtsH (637 aa).

The Cytoplasmic segment spans residues 1 to 6; sequence MNNQGR. A helical transmembrane segment spans residues 7–27; it reads SILAWAALFIFVILLFNVFQS. Residues 28-103 lie on the Periplasmic side of the membrane; sequence DGLLGVRNNI…VVPLETRMNT (76 aa). A helical transmembrane segment spans residues 104-124; sequence FLGFLISWFPMLLLIGVWVFF. Over 125 to 637 the chain is Cytoplasmic; that stretch reads MRQMHGGGKA…TKDKKENIIS (513 aa). 195-202 is a binding site for ATP; that stretch reads GPPGTGKT. Zn(2+) is bound at residue H417. Residue E418 is part of the active site. Residues H421 and D495 each contribute to the Zn(2+) site.

It in the central section; belongs to the AAA ATPase family. The protein in the C-terminal section; belongs to the peptidase M41 family. As to quaternary structure, homohexamer. Requires Zn(2+) as cofactor.

The protein localises to the cell inner membrane. Its function is as follows. Acts as a processive, ATP-dependent zinc metallopeptidase for both cytoplasmic and membrane proteins. Plays a role in the quality control of integral membrane proteins. The protein is ATP-dependent zinc metalloprotease FtsH of Rickettsia prowazekii (strain Madrid E).